Reading from the N-terminus, the 620-residue chain is Translation initiation factor IF-2 (620 aa).

Positions 126–295 constitute a tr-type G domain; the sequence is KRPPIVTIMG…IVTAEIMELK (170 aa). Positions 135 to 142 are G1; the sequence is GHVDHGKT. 135 to 142 contributes to the GTP binding site; sequence GHVDHGKT. The segment at 160 to 164 is G2; that stretch reads NITQS. A G3 region spans residues 181–184; sequence DTPG. Residues 181 to 185 and 235 to 238 each bind GTP; these read DTPGH and NKMD. The tract at residues 235–238 is G4; it reads NKMD. Residues 271 to 273 form a G5 region; that stretch reads SAL.

Belongs to the TRAFAC class translation factor GTPase superfamily. Classic translation factor GTPase family. IF-2 subfamily.

It localises to the cytoplasm. Its function is as follows. One of the essential components for the initiation of protein synthesis. Protects formylmethionyl-tRNA from spontaneous hydrolysis and promotes its binding to the 30S ribosomal subunits. Also involved in the hydrolysis of GTP during the formation of the 70S ribosomal complex. The chain is Translation initiation factor IF-2 from Malacoplasma penetrans (strain HF-2) (Mycoplasma penetrans).